A 540-amino-acid polypeptide reads, in one-letter code: Calnexin homolog (540 aa).

The N-terminal stretch at 1-29 (MELSRRKMCCYIQFCCFVLIGCFISQICA) is a signal peptide. Over 30–469 (SSDAIFYESF…EKAETQPNIT (440 aa)) the chain is Lumenal. Residues S38 and D69 each coordinate Ca(2+). Cysteines 112 and 147 form a disulfide. An alpha-D-glucoside is bound by residues Y116, K118, Y138, and D145. The segment at 221 to 301 (LIPTKTIPDP…DWDDEEDGEW (81 aa)) is disordered. Residues 227-360 (IPDPDDKKPE…REIPNPDYFE (134 aa)) form a p domain (Extended arm) region. The segment covering 228-253 (PDPDDKKPEDWDERAKIPDPEATKPD) has biased composition (basic and acidic residues). 5 consecutive repeat copies span residues 229–240 (DPDDKKPEDWDE), 246–257 (DPEATKPDDWDE), 265–276 (DEEAEKPEGWLD), 284–295 (DPEAVKPEDWDD), and 299–309 (GEWEAPQIENP). 2 4 X approximate repeats regions span residues 229–295 (DPDD…DWDD) and 299–356 (GEWE…IPNP). Composition is skewed to acidic residues over residues 254 to 285 (DWDE…IDDP) and 292 to 301 (DWDDEEDGEW). Residues C311 and C317 are joined by a disulfide bond. 3 consecutive repeat copies span residues 318-328 (GEWRRPLKRNP), 332-342 (GKWHAPLIDNP), and 346-356 (GIWKPREIPNP). Position 375 (E375) interacts with an alpha-D-glucoside. A Ca(2+)-binding site is contributed by D386. A glycan (N-linked (GlcNAc...) asparagine) is linked at N467. The chain crosses the membrane as a helical span at residues 470–490 (IGVIVSIIVVIFSILLKLLFG). The Cytoplasmic portion of the chain corresponds to 491 to 540 (GKKAAPKVNVVPKKKEEPEASNTAEVREGEEEKTEGEVAAAPRRRPRRDT). Residues 499 to 540 (NVVPKKKEEPEASNTAEVREGEEEKTEGEVAAAPRRRPRRDT) form a disordered region.

This sequence belongs to the calreticulin family.

The protein localises to the endoplasmic reticulum membrane. Its function is as follows. Calcium-binding protein that interacts with newly synthesized monoglucosylated glycoproteins in the endoplasmic reticulum. It may act in assisting protein assembly and/or in the retention within the ER of unassembled protein subunits. It seems to play a major role in the quality control apparatus of the ER by the retention of incorrectly folded proteins. In Helianthus tuberosus (Jerusalem artichoke), this protein is Calnexin homolog.